A 98-amino-acid chain; its full sequence is NADH-ubiquinone oxidoreductase chain 4L (98 aa).

3 consecutive transmembrane segments (helical) span residues 1–21 (MSLT…GLLM), 29–49 (SLLC…MTIL), and 61–81 (IILL…LVMV).

This sequence belongs to the complex I subunit 4L family. As to quaternary structure, core subunit of respiratory chain NADH dehydrogenase (Complex I) which is composed of 45 different subunits.

Its subcellular location is the mitochondrion inner membrane. The catalysed reaction is a ubiquinone + NADH + 5 H(+)(in) = a ubiquinol + NAD(+) + 4 H(+)(out). In terms of biological role, core subunit of the mitochondrial membrane respiratory chain NADH dehydrogenase (Complex I) which catalyzes electron transfer from NADH through the respiratory chain, using ubiquinone as an electron acceptor. Part of the enzyme membrane arm which is embedded in the lipid bilayer and involved in proton translocation. This Stenoderma rufum (Red fruit bat) protein is NADH-ubiquinone oxidoreductase chain 4L (MT-ND4L).